A 370-amino-acid polypeptide reads, in one-letter code: DNA replication and repair protein RecF (370 aa).

Residue 30 to 37 (GDNGSGKT) coordinates ATP.

The protein belongs to the RecF family.

It localises to the cytoplasm. The RecF protein is involved in DNA metabolism; it is required for DNA replication and normal SOS inducibility. RecF binds preferentially to single-stranded, linear DNA. It also seems to bind ATP. The sequence is that of DNA replication and repair protein RecF from Stutzerimonas stutzeri (strain A1501) (Pseudomonas stutzeri).